We begin with the raw amino-acid sequence, 256 residues long: Phosphonates import ATP-binding protein PhnC (256 aa).

The 245-residue stretch at 7 to 251 (IEMKNVTKVY…VFDNIYNGGK (245 aa)) folds into the ABC transporter domain. Position 40 to 47 (40 to 47 (GLSGAGKS)) interacts with ATP.

This sequence belongs to the ABC transporter superfamily. Phosphonates importer (TC 3.A.1.9.1) family. In terms of assembly, the complex is composed of two ATP-binding proteins (PhnC), two transmembrane proteins (PhnE) and a solute-binding protein (PhnD).

It is found in the cell membrane. The enzyme catalyses phosphonate(out) + ATP + H2O = phosphonate(in) + ADP + phosphate + H(+). Functionally, part of the ABC transporter complex PhnCDE involved in phosphonates import. Responsible for energy coupling to the transport system. The polypeptide is Phosphonates import ATP-binding protein PhnC (Lactobacillus delbrueckii subsp. bulgaricus (strain ATCC 11842 / DSM 20081 / BCRC 10696 / JCM 1002 / NBRC 13953 / NCIMB 11778 / NCTC 12712 / WDCM 00102 / Lb 14)).